A 276-amino-acid polypeptide reads, in one-letter code: Large ribosomal subunit protein uL2 (276 aa).

Positions 223 to 276 (VVMNPVDHPHGGGEGKSSGGRHPVSPWGKKTRGPKTRNNKVTDRLIIRRRNAKR) are disordered. Over residues 251–260 (KKTRGPKTRN) the composition is skewed to basic residues.

This sequence belongs to the universal ribosomal protein uL2 family. As to quaternary structure, part of the 50S ribosomal subunit. Forms a bridge to the 30S subunit in the 70S ribosome.

Functionally, one of the primary rRNA binding proteins. Required for association of the 30S and 50S subunits to form the 70S ribosome, for tRNA binding and peptide bond formation. It has been suggested to have peptidyltransferase activity; this is somewhat controversial. Makes several contacts with the 16S rRNA in the 70S ribosome. The chain is Large ribosomal subunit protein uL2 from Hyphomonas neptunium (strain ATCC 15444).